An 80-amino-acid chain; its full sequence is MKPEIHPIYREVVFHDVTSNFKFLTRSTMGTKETTLWEDGLEYPLVKVEISSASHPFYTGKHKLVDTSGRIDKFKKRYAR.

It belongs to the bacterial ribosomal protein bL31 family. Type B subfamily. In terms of assembly, part of the 50S ribosomal subunit.

This chain is Large ribosomal subunit protein bL31B, found in Xylella fastidiosa (strain M23).